The primary structure comprises 321 residues: Peroxidase 27 (321 aa).

Positions 1 to 23 are cleaved as a signal peptide; the sequence is MAASKRLVVSCLFLVLLFAQANS. 4 disulfide bridges follow: Cys35-Cys113, Cys68-Cys73, Cys119-Cys317, and Cys196-Cys228. The Proton acceptor role is filled by His66. Positions 67, 70, 72, 74, and 76 each coordinate Ca(2+). Residue Pro159 participates in substrate binding. N-linked (GlcNAc...) asparagine glycosylation occurs at Asn164. Heme b is bound at residue His189. Residue Thr190 coordinates Ca(2+). Asn205 carries N-linked (GlcNAc...) asparagine glycosylation. Ca(2+) contacts are provided by Asp240, Ser243, and Asp248.

This sequence belongs to the peroxidase family. Classical plant (class III) peroxidase subfamily. Requires heme b as cofactor. Ca(2+) is required as a cofactor. As to expression, expressed in the whole plant, but preferentially in roots and flowers.

It is found in the secreted. It catalyses the reaction 2 a phenolic donor + H2O2 = 2 a phenolic radical donor + 2 H2O. In terms of biological role, removal of H(2)O(2), oxidation of toxic reductants, biosynthesis and degradation of lignin, suberization, auxin catabolism, response to environmental stresses such as wounding, pathogen attack and oxidative stress. These functions might be dependent on each isozyme/isoform in each plant tissue. This Arabidopsis thaliana (Mouse-ear cress) protein is Peroxidase 27 (PER27).